A 422-amino-acid chain; its full sequence is Glutamate-1-semialdehyde 2,1-aminomutase (422 aa).

At Lys258 the chain carries N6-(pyridoxal phosphate)lysine.

It belongs to the class-III pyridoxal-phosphate-dependent aminotransferase family. HemL subfamily. In terms of assembly, homodimer. Pyridoxal 5'-phosphate serves as cofactor.

It is found in the cytoplasm. It catalyses the reaction (S)-4-amino-5-oxopentanoate = 5-aminolevulinate. The protein operates within porphyrin-containing compound metabolism; protoporphyrin-IX biosynthesis; 5-aminolevulinate from L-glutamyl-tRNA(Glu): step 2/2. This chain is Glutamate-1-semialdehyde 2,1-aminomutase, found in Chlamydia trachomatis serovar D (strain ATCC VR-885 / DSM 19411 / UW-3/Cx).